A 144-amino-acid chain; its full sequence is 3-hydroxyacyl-[acyl-carrier-protein] dehydratase FabZ (144 aa).

The active site involves His48.

It belongs to the thioester dehydratase family. FabZ subfamily.

The protein localises to the cytoplasm. It carries out the reaction a (3R)-hydroxyacyl-[ACP] = a (2E)-enoyl-[ACP] + H2O. Its function is as follows. Involved in unsaturated fatty acids biosynthesis. Catalyzes the dehydration of short chain beta-hydroxyacyl-ACPs and long chain saturated and unsaturated beta-hydroxyacyl-ACPs. This Listeria innocua serovar 6a (strain ATCC BAA-680 / CLIP 11262) protein is 3-hydroxyacyl-[acyl-carrier-protein] dehydratase FabZ.